We begin with the raw amino-acid sequence, 179 residues long: Large ribosomal subunit protein uL5 (179 aa).

The protein belongs to the universal ribosomal protein uL5 family. Part of the 50S ribosomal subunit; part of the 5S rRNA/L5/L18/L25 subcomplex. Contacts the 5S rRNA and the P site tRNA. Forms a bridge to the 30S subunit in the 70S ribosome.

Functionally, this is one of the proteins that bind and probably mediate the attachment of the 5S RNA into the large ribosomal subunit, where it forms part of the central protuberance. In the 70S ribosome it contacts protein S13 of the 30S subunit (bridge B1b), connecting the 2 subunits; this bridge is implicated in subunit movement. Contacts the P site tRNA; the 5S rRNA and some of its associated proteins might help stabilize positioning of ribosome-bound tRNAs. In Shewanella loihica (strain ATCC BAA-1088 / PV-4), this protein is Large ribosomal subunit protein uL5.